The following is a 364-amino-acid chain: tRNA-specific 2-thiouridylase MnmA (364 aa).

Residues 12-19 and methionine 38 contribute to the ATP site; that span reads GISGGVDS. Positions 98 to 100 are interaction with target base in tRNA; sequence NPD. Residue cysteine 103 is the Nucleophile of the active site. Cysteine 103 and cysteine 199 are disulfide-bonded. Glycine 127 contributes to the ATP binding site. The tract at residues 149–151 is interaction with tRNA; the sequence is KEQ. Residue cysteine 199 is the Cysteine persulfide intermediate of the active site. Residues 311-312 are interaction with tRNA; the sequence is RY.

The protein belongs to the MnmA/TRMU family.

The protein localises to the cytoplasm. It catalyses the reaction S-sulfanyl-L-cysteinyl-[protein] + uridine(34) in tRNA + AH2 + ATP = 2-thiouridine(34) in tRNA + L-cysteinyl-[protein] + A + AMP + diphosphate + H(+). Functionally, catalyzes the 2-thiolation of uridine at the wobble position (U34) of tRNA, leading to the formation of s(2)U34. The sequence is that of tRNA-specific 2-thiouridylase MnmA from Hahella chejuensis (strain KCTC 2396).